Reading from the N-terminus, the 845-residue chain is Ribosome-releasing factor 2, mitochondrial (845 aa).

The transit peptide at 1–28 (MIIATSLRSQTFCTWRAWRAVHSTAVRL) directs the protein to the mitochondrion. One can recognise a tr-type G domain in the interval 38–330 (DRTRNIGIIA…GVVKYLPSPL (293 aa)). GTP-binding positions include 47-54 (AHIDAGKT), 111-115 (DTPGH), and 165-168 (NKMD).

The protein belongs to the TRAFAC class translation factor GTPase superfamily. Classic translation factor GTPase family. EF-G/EF-2 subfamily.

Its subcellular location is the mitochondrion. Its function is as follows. Mitochondrial GTPase that mediates the disassembly of ribosomes from messenger RNA at the termination of mitochondrial protein biosynthesis. Not involved in the GTP-dependent ribosomal translocation step during translation elongation. In Scheffersomyces stipitis (strain ATCC 58785 / CBS 6054 / NBRC 10063 / NRRL Y-11545) (Yeast), this protein is Ribosome-releasing factor 2, mitochondrial.